A 400-amino-acid chain; its full sequence is Snake venom metalloproteinase H3 (400 aa).

The N-terminal stretch at 1–6 (FPYQGS) is a signal peptide. A propeptide spanning residues 7–176 (SIILESGNVN…KKASQLIVST (170 aa)) is cleaved from the precursor. The 198-residue stretch at 180–377 (KYMEIVIVVD…ENPPCILNKP (198 aa)) folds into the Peptidase M12B domain. Ca(2+) contacts are provided by Glu-183 and Asp-267. Disulfide bonds link Cys-291–Cys-372, Cys-331–Cys-356, and Cys-333–Cys-339. His-316 provides a ligand contact to Zn(2+). Glu-317 is a catalytic residue. The Zn(2+) site is built by His-320 and His-326. Ca(2+) is bound by residues Cys-372, Asn-375, Val-387, Asn-390, Leu-392, Glu-394, and Asp-400. Residues 378-400 (LRTDTVSTPVSGNELLEAGKDYD) constitute a propeptide that is removed on maturation.

This sequence belongs to the venom metalloproteinase (M12B) family. P-I subfamily. As to quaternary structure, monomer. Zn(2+) serves as cofactor. In terms of tissue distribution, expressed by the venom gland.

The protein resides in the secreted. Functionally, snake venom metalloproteinase that impairs hemostasis in the envenomed animal. The sequence is that of Snake venom metalloproteinase H3 from Deinagkistrodon acutus (Hundred-pace snake).